Here is a 316-residue protein sequence, read N- to C-terminus: D-alanine--D-alanine ligase (316 aa).

Positions 104–303 (KRVWLQHGLP…YADLCVAILA (200 aa)) constitute an ATP-grasp domain. Residue 130–185 (PDRLGLPLILKPPHEGSTVGITKVAGYSDMKAAYELAARFDAEVLAEQFITGRELT) coordinates ATP. The Mg(2+) site is built by aspartate 257, glutamate 270, and asparagine 272.

The protein belongs to the D-alanine--D-alanine ligase family. It depends on Mg(2+) as a cofactor. Mn(2+) is required as a cofactor.

Its subcellular location is the cytoplasm. It catalyses the reaction 2 D-alanine + ATP = D-alanyl-D-alanine + ADP + phosphate + H(+). It functions in the pathway cell wall biogenesis; peptidoglycan biosynthesis. Cell wall formation. The sequence is that of D-alanine--D-alanine ligase from Bordetella parapertussis (strain 12822 / ATCC BAA-587 / NCTC 13253).